We begin with the raw amino-acid sequence, 71 residues long: Small integral membrane protein 31 (71 aa).

A helical transmembrane segment spans residues 8–28 (LEMAFILLAFVIFSLFTLASI). The interval 31–71 (TPDDSNEEEEHEKKGREKKRKKSEKKKNCSEEEHRIEAVEL) is disordered. Positions 46 to 55 (REKKRKKSEK) are enriched in basic residues. The span at 56–71 (KKNCSEEEHRIEAVEL) shows a compositional bias: basic and acidic residues. Asn-58 is a glycosylation site (N-linked (GlcNAc...) asparagine).

It is found in the membrane. The polypeptide is Small integral membrane protein 31 (Homo sapiens (Human)).